The primary structure comprises 314 residues: tRNA pseudouridine synthase B (314 aa).

H43 lines the substrate pocket. Residue D48 is the Nucleophile of the active site. Residues Y76, Y179, and L200 each coordinate substrate.

Belongs to the pseudouridine synthase TruB family. Type 1 subfamily.

The catalysed reaction is uridine(55) in tRNA = pseudouridine(55) in tRNA. Responsible for synthesis of pseudouridine from uracil-55 in the psi GC loop of transfer RNAs. The chain is tRNA pseudouridine synthase B from Salmonella typhi.